Here is a 317-residue protein sequence, read N- to C-terminus: Acetyl-coenzyme A carboxylase carboxyl transferase subunit alpha (317 aa).

Residues 39–293 (RLESRVNDAM…GDVIAKALAD (255 aa)) enclose the CoA carboxyltransferase C-terminal domain.

The protein belongs to the AccA family. In terms of assembly, acetyl-CoA carboxylase is a heterohexamer composed of biotin carboxyl carrier protein (AccB), biotin carboxylase (AccC) and two subunits each of ACCase subunit alpha (AccA) and ACCase subunit beta (AccD).

It is found in the cytoplasm. The catalysed reaction is N(6)-carboxybiotinyl-L-lysyl-[protein] + acetyl-CoA = N(6)-biotinyl-L-lysyl-[protein] + malonyl-CoA. It participates in lipid metabolism; malonyl-CoA biosynthesis; malonyl-CoA from acetyl-CoA: step 1/1. Its function is as follows. Component of the acetyl coenzyme A carboxylase (ACC) complex. First, biotin carboxylase catalyzes the carboxylation of biotin on its carrier protein (BCCP) and then the CO(2) group is transferred by the carboxyltransferase to acetyl-CoA to form malonyl-CoA. The polypeptide is Acetyl-coenzyme A carboxylase carboxyl transferase subunit alpha (Agrobacterium fabrum (strain C58 / ATCC 33970) (Agrobacterium tumefaciens (strain C58))).